The following is a 124-amino-acid chain: NAD(P)H-quinone oxidoreductase subunit 5, chloroplastic (124 aa).

3 helical membrane-spanning segments follow: residues 22–42 (TPIS…FLVA), 44–64 (LLPL…IGII), and 91–111 (LGYM…FHLI).

It belongs to the complex I subunit 5 family. In terms of assembly, NDH is composed of at least 16 different subunits, 5 of which are encoded in the nucleus.

Its subcellular location is the plastid. The protein resides in the chloroplast thylakoid membrane. The catalysed reaction is a plastoquinone + NADH + (n+1) H(+)(in) = a plastoquinol + NAD(+) + n H(+)(out). It carries out the reaction a plastoquinone + NADPH + (n+1) H(+)(in) = a plastoquinol + NADP(+) + n H(+)(out). Functionally, NDH shuttles electrons from NAD(P)H:plastoquinone, via FMN and iron-sulfur (Fe-S) centers, to quinones in the photosynthetic chain and possibly in a chloroplast respiratory chain. The immediate electron acceptor for the enzyme in this species is believed to be plastoquinone. Couples the redox reaction to proton translocation, and thus conserves the redox energy in a proton gradient. This Pisum sativum (Garden pea) protein is NAD(P)H-quinone oxidoreductase subunit 5, chloroplastic (ndhF).